A 353-amino-acid chain; its full sequence is Fasciculation and elongation protein zeta-2 (353 aa).

Positions 19–49 (SLLDQENCNASPEPGAEAGAEAGGGADGFPA) are disordered. A compositionally biased stretch (low complexity) spans 28-38 (ASPEPGAEAGA). Ser-135, Ser-176, and Ser-195 each carry phosphoserine. Positions 214–286 (KRLSVSELNE…AKKKKKLKNG (73 aa)) form a coiled coil. A disordered region spans residues 271–300 (KEHKETAKKKKKLKNGSSQNGKNERSHMPG).

The protein belongs to the zygin family. As to quaternary structure, homodimer; disulfide-linked. May form heterodimers with FEZ1. Interacts with synaptotagmin. As to expression, expressed in nonneural tissues, such as heart, lung, spleen, muscle, testis, placenta and melanocytes.

Its function is as follows. Involved in axonal outgrowth and fasciculation. This chain is Fasciculation and elongation protein zeta-2 (FEZ2), found in Homo sapiens (Human).